The chain runs to 463 residues: Succinate--CoA ligase [ADP-forming] subunit beta, mitochondrial (463 aa).

The N-terminal 53 residues, 1 to 53, are a transit peptide targeting the mitochondrion; the sequence is MAASMFYGRQLAAAALRSHRPQTTLRAAAQVLGNSGLFNKHGLQVQQQQQRTL. The ATP-grasp domain maps to 61-288; that stretch reads MELLQEAGVS…SNSAYRQKKI (228 aa). Lys78 carries the post-translational modification N6-acetyllysine. Tyr84 is subject to Phosphotyrosine. Lys88 bears the N6-acetyllysine; alternate mark. At Lys88 the chain carries N6-succinyllysine; alternate. ATP is bound by residues Lys98 and 105–107; that span reads GRG. 4 positions are modified to N6-acetyllysine: Lys129, Lys139, Lys143, and Lys216. Mg(2+)-binding residues include Asn258 and Asp272. Phosphoserine is present on Ser279. Position 323 (Asn323) interacts with substrate. Thr341 carries the phosphothreonine modification. Lys368 carries the N6-acetyllysine modification. 380-382 provides a ligand contact to substrate; that stretch reads GIM. N6-acetyllysine is present on Lys438.

The protein belongs to the succinate/malate CoA ligase beta subunit family. ATP-specific subunit beta subfamily. In terms of assembly, heterodimer of an alpha and a beta subunit. The beta subunit determines specificity for ATP. Interacts with ALAS2. The cofactor is Mg(2+).

Its subcellular location is the mitochondrion. The catalysed reaction is succinate + ATP + CoA = succinyl-CoA + ADP + phosphate. The protein operates within carbohydrate metabolism; tricarboxylic acid cycle; succinate from succinyl-CoA (ligase route): step 1/1. In terms of biological role, ATP-specific succinyl-CoA synthetase functions in the citric acid cycle (TCA), coupling the hydrolysis of succinyl-CoA to the synthesis of ATP and thus represents the only step of substrate-level phosphorylation in the TCA. The beta subunit provides nucleotide specificity of the enzyme and binds the substrate succinate, while the binding sites for coenzyme A and phosphate are found in the alpha subunit. The chain is Succinate--CoA ligase [ADP-forming] subunit beta, mitochondrial from Mus musculus (Mouse).